We begin with the raw amino-acid sequence, 897 residues long: Alanine--tRNA ligase (897 aa).

Zn(2+) is bound by residues His-591, His-595, Cys-695, and His-699.

It belongs to the class-II aminoacyl-tRNA synthetase family. Zn(2+) serves as cofactor.

The protein resides in the cytoplasm. The catalysed reaction is tRNA(Ala) + L-alanine + ATP = L-alanyl-tRNA(Ala) + AMP + diphosphate. Catalyzes the attachment of alanine to tRNA(Ala) in a two-step reaction: alanine is first activated by ATP to form Ala-AMP and then transferred to the acceptor end of tRNA(Ala). Also edits incorrectly charged Ser-tRNA(Ala) and Gly-tRNA(Ala) via its editing domain. In Methanobrevibacter smithii (strain ATCC 35061 / DSM 861 / OCM 144 / PS), this protein is Alanine--tRNA ligase.